Reading from the N-terminus, the 330-residue chain is Succinylglutamate desuccinylase (330 aa).

Zn(2+) is bound by residues histidine 53, glutamate 56, and histidine 147. Glutamate 210 is an active-site residue.

The protein belongs to the AspA/AstE family. Succinylglutamate desuccinylase subfamily. The cofactor is Zn(2+).

The enzyme catalyses N-succinyl-L-glutamate + H2O = L-glutamate + succinate. It functions in the pathway amino-acid degradation; L-arginine degradation via AST pathway; L-glutamate and succinate from L-arginine: step 5/5. In terms of biological role, transforms N(2)-succinylglutamate into succinate and glutamate. The polypeptide is Succinylglutamate desuccinylase (Yersinia pseudotuberculosis serotype O:3 (strain YPIII)).